A 95-amino-acid chain; its full sequence is TBK1 inhibitor DP96R (95 aa).

It belongs to the asfivirus DP96R family.

Functionally, inhibits cGAS-STING-mediated type I IFN expression and NF-kB activation by inhibiting TBK1 and IKBKB/IKKB. Inhibits host TBK1 phosphorylation. The polypeptide is TBK1 inhibitor DP96R (Ornithodoros (relapsing fever ticks)).